The primary structure comprises 135 residues: Ribonuclease P protein component (135 aa).

A disordered region spans residues 115 to 135; it reads ETEPVSPVSPTSLPQNERGSP. Over residues 122–135 the composition is skewed to polar residues; that stretch reads VSPTSLPQNERGSP.

This sequence belongs to the RnpA family. As to quaternary structure, consists of a catalytic RNA component (M1 or rnpB) and a protein subunit.

It carries out the reaction Endonucleolytic cleavage of RNA, removing 5'-extranucleotides from tRNA precursor.. Its function is as follows. RNaseP catalyzes the removal of the 5'-leader sequence from pre-tRNA to produce the mature 5'-terminus. It can also cleave other RNA substrates such as 4.5S RNA. The protein component plays an auxiliary but essential role in vivo by binding to the 5'-leader sequence and broadening the substrate specificity of the ribozyme. The polypeptide is Ribonuclease P protein component (Chloroflexus aggregans (strain MD-66 / DSM 9485)).